A 353-amino-acid polypeptide reads, in one-letter code: Nicotinate-nucleotide--dimethylbenzimidazole phosphoribosyltransferase (353 aa).

Glu319 acts as the Proton acceptor in catalysis.

It belongs to the CobT family.

The enzyme catalyses 5,6-dimethylbenzimidazole + nicotinate beta-D-ribonucleotide = alpha-ribazole 5'-phosphate + nicotinate + H(+). The protein operates within nucleoside biosynthesis; alpha-ribazole biosynthesis; alpha-ribazole from 5,6-dimethylbenzimidazole: step 1/2. Catalyzes the synthesis of alpha-ribazole-5'-phosphate from nicotinate mononucleotide (NAMN) and 5,6-dimethylbenzimidazole (DMB). This is Nicotinate-nucleotide--dimethylbenzimidazole phosphoribosyltransferase from Chlorobaculum tepidum (strain ATCC 49652 / DSM 12025 / NBRC 103806 / TLS) (Chlorobium tepidum).